The chain runs to 450 residues: Tubulin alpha chain (450 aa).

Residue Gln-11 participates in GTP binding. Lys-40 bears the N6-acetyllysine mark. GTP contacts are provided by Glu-71, Ser-140, Gly-144, Thr-145, Thr-179, Asn-206, and Asn-228. A Mg(2+)-binding site is contributed by Glu-71. The active site involves Glu-254.

It belongs to the tubulin family. As to quaternary structure, dimer of alpha and beta chains. A typical microtubule is a hollow water-filled tube with an outer diameter of 25 nm and an inner diameter of 15 nM. Alpha-beta heterodimers associate head-to-tail to form protofilaments running lengthwise along the microtubule wall with the beta-tubulin subunit facing the microtubule plus end conferring a structural polarity. Microtubules usually have 13 protofilaments but different protofilament numbers can be found in some organisms and specialized cells. It depends on Mg(2+) as a cofactor. Undergoes a tyrosination/detyrosination cycle, the cyclic removal and re-addition of a C-terminal tyrosine residue by the enzymes tubulin tyrosine carboxypeptidase (TTCP) and tubulin tyrosine ligase (TTL), respectively. In terms of processing, acetylation of alpha chains at Lys-40 stabilizes microtubules and affects affinity and processivity of microtubule motors. This modification has a role in multiple cellular functions, ranging from cell motility, cell cycle progression or cell differentiation to intracellular trafficking and signaling.

Its subcellular location is the cytoplasm. It localises to the cytoskeleton. The enzyme catalyses GTP + H2O = GDP + phosphate + H(+). Functionally, tubulin is the major constituent of microtubules, a cylinder consisting of laterally associated linear protofilaments composed of alpha- and beta-tubulin heterodimers. Microtubules grow by the addition of GTP-tubulin dimers to the microtubule end, where a stabilizing cap forms. Below the cap, tubulin dimers are in GDP-bound state, owing to GTPase activity of alpha-tubulin. The polypeptide is Tubulin alpha chain (Haemonchus contortus (Barber pole worm)).